The chain runs to 286 residues: Bifunctional protein FolD (286 aa).

NADP(+) contacts are provided by residues 166–168 (GAS) and Ile-232.

It belongs to the tetrahydrofolate dehydrogenase/cyclohydrolase family. In terms of assembly, homodimer.

It carries out the reaction (6R)-5,10-methylene-5,6,7,8-tetrahydrofolate + NADP(+) = (6R)-5,10-methenyltetrahydrofolate + NADPH. The enzyme catalyses (6R)-5,10-methenyltetrahydrofolate + H2O = (6R)-10-formyltetrahydrofolate + H(+). It functions in the pathway one-carbon metabolism; tetrahydrofolate interconversion. Its function is as follows. Catalyzes the oxidation of 5,10-methylenetetrahydrofolate to 5,10-methenyltetrahydrofolate and then the hydrolysis of 5,10-methenyltetrahydrofolate to 10-formyltetrahydrofolate. This Shewanella denitrificans (strain OS217 / ATCC BAA-1090 / DSM 15013) protein is Bifunctional protein FolD.